The following is a 206-amino-acid chain: Large ribosomal subunit protein uL4 (206 aa).

The protein belongs to the universal ribosomal protein uL4 family. In terms of assembly, part of the 50S ribosomal subunit.

Functionally, one of the primary rRNA binding proteins, this protein initially binds near the 5'-end of the 23S rRNA. It is important during the early stages of 50S assembly. It makes multiple contacts with different domains of the 23S rRNA in the assembled 50S subunit and ribosome. In terms of biological role, forms part of the polypeptide exit tunnel. The protein is Large ribosomal subunit protein uL4 of Methylobacterium radiotolerans (strain ATCC 27329 / DSM 1819 / JCM 2831 / NBRC 15690 / NCIMB 10815 / 0-1).